A 654-amino-acid chain; its full sequence is Acetyl-coenzyme A synthetase (654 aa).

CoA-binding positions include 190–193 (RGGK) and T313. Residues 389–391 (GEP), 413–418 (DTWWQT), D504, and R519 contribute to the ATP site. CoA is bound at residue S527. Residue R530 coordinates ATP. Residues V541, H543, and V546 each coordinate Mg(2+). K613 bears the N6-acetyllysine mark.

It belongs to the ATP-dependent AMP-binding enzyme family. Requires Mg(2+) as cofactor. In terms of processing, acetylated. Deacetylation by the SIR2-homolog deacetylase activates the enzyme.

The enzyme catalyses acetate + ATP + CoA = acetyl-CoA + AMP + diphosphate. In terms of biological role, catalyzes the conversion of acetate into acetyl-CoA (AcCoA), an essential intermediate at the junction of anabolic and catabolic pathways. AcsA undergoes a two-step reaction. In the first half reaction, AcsA combines acetate with ATP to form acetyl-adenylate (AcAMP) intermediate. In the second half reaction, it can then transfer the acetyl group from AcAMP to the sulfhydryl group of CoA, forming the product AcCoA. The chain is Acetyl-coenzyme A synthetase from Leptospira biflexa serovar Patoc (strain Patoc 1 / Ames).